A 483-amino-acid chain; its full sequence is Pre-glycoprotein polyprotein GP complex (483 aa).

Gly2 carries the N-myristoyl glycine; by host lipid modification. The Extracellular portion of the chain corresponds to 2–17 (GQLVSFIGEIPAIVHE). Residues 18 to 32 (ALNVALIAVSIIAIM) form a helical membrane-spanning segment. Position 33 (Lys33) is a topological domain, cytoplasmic. The chain crosses the membrane as a helical span at residues 34–53 (GLINIWKSGLFQLIMFLILA). Extracellular loops occupy residues 54–58 (GRSCS) and 59–422 (ISIG…SLVD). Cys57 is a binding site for Zn(2+). N-linked (GlcNAc...) asparagine; by host glycans are attached at residues Asn73, Asn88, Asn130, and Asn179. Disulfide bonds link Cys85-Cys223, Cys186-Cys204, Cys269-Cys282, Cys291-Cys300, and Cys354-Cys375. Residue Asn216 is glycosylated (N-linked (GlcNAc...) asparagine; by host). Residues Asn355, Asn363, Asn380, and Asn385 are each glycosylated (N-linked (GlcNAc...) asparagine; by host). Residues 423–443 (LCFWSTLFYTASIFLHLLHIP) form a helical membrane-spanning segment. The Cytoplasmic portion of the chain corresponds to 444–483 (THRHIIGEGCPKPHRLTSDSLCACGFFQLKGRPTRWARIP). 6 residues coordinate Zn(2+): His445, His447, Cys453, His457, Cys465, and Cys467.

It belongs to the arenaviridae GPC protein family. Homotetramer; disulfide-linked. In terms of assembly, homotetramer. GP2 homotetramers bind through ionic interactions with GP1 homotetramers to form the GP complex together with the stable signal peptide. The GP-C polyprotein interacts with the host protease MBTPS1/SKI-1 resulting in the polyprotein processing. In terms of processing, specific enzymatic cleavages in vivo yield mature proteins. GP-C polyprotein is cleaved in the endoplasmic reticulum by the host protease MBTPS1. Only cleaved glycoprotein is incorporated into virions. The SSP remains stably associated with the GP complex following cleavage by signal peptidase and plays crucial roles in the trafficking of GP through the secretory pathway. Post-translationally, myristoylation is necessary for GP2-mediated fusion activity.

The protein resides in the virion membrane. It localises to the host endoplasmic reticulum membrane. Its subcellular location is the host Golgi apparatus membrane. The protein localises to the host cell membrane. Class I viral fusion protein that directs fusion of viral and host endosomal membranes, leading to delivery of the nucleocapsid into the cytoplasm. Membrane fusion is mediated by irreversible conformational changes induced upon acidification in the endosome. In terms of biological role, stable signal peptide (SSP): cleaved and functions as a signal peptide. In addition, it is also retained as the third component of the GP complex. The SSP is required for efficient glycoprotein expression, post-translational maturation cleavage of GP1 and GP2, glycoprotein transport to the cell surface plasma membrane, formation of infectious virus particles, and acid pH-dependent glycoprotein-mediated cell fusion. Its function is as follows. Interacts with the host receptor. This is Pre-glycoprotein polyprotein GP complex from Peromyscus californicus (California mouse).